The chain runs to 127 residues: Glycine cleavage system H protein (127 aa).

One can recognise a Lipoyl-binding domain in the interval 23–104 (TALVGLTDYA…PYEAWFAKIT (82 aa)). Position 64 is an N6-lipoyllysine (Lys64).

It belongs to the GcvH family. In terms of assembly, the glycine cleavage system is composed of four proteins: P, T, L and H. (R)-lipoate serves as cofactor.

The glycine cleavage system catalyzes the degradation of glycine. The H protein shuttles the methylamine group of glycine from the P protein to the T protein. The protein is Glycine cleavage system H protein of Lachnoclostridium phytofermentans (strain ATCC 700394 / DSM 18823 / ISDg) (Clostridium phytofermentans).